The following is a 75-amino-acid chain: Disintegrin CTF-II (75 aa).

The Disintegrin domain maps to 1 to 75 (ELLEEGEDCY…SDDCPRWNDL (75 aa)). Cystine bridges form between C9/C24, C11/C19, C18/C41, C32/C38, C37/C62, and C50/C69. A Cell attachment site motif is present at residues 54 to 56 (RGD).

Belongs to the venom metalloproteinase (M12B) family. P-II subfamily. P-IIa sub-subfamily. As to quaternary structure, monomer (disintegrin). As to expression, expressed by the venom gland.

It is found in the secreted. In terms of biological role, inhibits fibrinogen interaction with platelet receptors, and inhibits aggregation induced by ADP, thrombin, collagen and platelet-activating factor. Acts by binding to the alpha-IIb/beta-3 (ITGA2B/ITGB3) on the platelet surface. The protein is Disintegrin CTF-II of Protobothrops flavoviridis (Habu).